The chain runs to 331 residues: Vitamin B12 import system permease protein BtuC (331 aa).

Transmembrane regions (helical) follow at residues 20–42 (IMSV…FLSP), 62–84 (LVAA…VLLG), 91–113 (GVLG…LPVL), 118–140 (IFML…IARA), 147–169 (RLLL…AFYF), 189–208 (ASWY…VWLC), 240–262 (LAIS…VGLV), 277–299 (YLLP…GARL), and 306–325 (LPLG…WMLV).

Belongs to the binding-protein-dependent transport system permease family. FecCD subfamily. As to quaternary structure, the complex is composed of two ATP-binding proteins (BtuD), two transmembrane proteins (BtuC) and a solute-binding protein (BtuF).

It localises to the cell inner membrane. Functionally, part of the ABC transporter complex BtuCDF involved in vitamin B12 import. Involved in the translocation of the substrate across the membrane. In Vibrio parahaemolyticus serotype O3:K6 (strain RIMD 2210633), this protein is Vitamin B12 import system permease protein BtuC.